We begin with the raw amino-acid sequence, 907 residues long: Gamma-tubulin complex component 3 (907 aa).

At A2 the chain carries N-acetylalanine. A Phosphoserine modification is found at S113. A compositionally biased stretch (polar residues) spans 210 to 230 (NQPSSQATTSKGVPSAVSRNM). The segment at 210 to 241 (NQPSSQATTSKGVPSAVSRNMTRSRREGDTGG) is disordered.

The protein belongs to the TUBGCP family. In terms of assembly, component of the gamma-tubulin ring complex (gTuRC) consisting of TUBGCP2, TUBGCP3, TUBGCP4, TUBGCP5 and TUBGCP6 and gamma-tubulin TUBG1 or TUBG2. TUBGCP2, TUBGCP3, TUBGCP4, TUBGCP5 and TUBGCP6 assemble in a 5:5:2:1:1 stoichiometry; each is associated with a gamma-tubulin, thereby arranging 14 gamma-tubulins in a helical manner. Gamma-tubulin at the first position is blocked by TUBGCP3 at the last position, allowing 13 protafilaments to grow into a microtubule. The gTuRC (via TUBGCP3 and TUBGCP6) interacts with ACTB and MZT1; the interactions form a luminal bridge that stabilizes the initial structure during complex assembly. The gTuRC (via TUBGCP2) interacts with MZT2A/MZT2B and CDK5RAP2 (via CM1 motif); the interactions play a role in gTuRC activation. Interacts with NIN (via N-terminus); the interaction may promote recruitment of the gamma-tubulin ring complex to the centrosome. In terms of tissue distribution, ubiquitously expressed.

Its subcellular location is the cytoplasm. The protein resides in the cytoskeleton. It is found in the microtubule organizing center. It localises to the centrosome. Component of the gamma-tubulin ring complex (gTuRC) which mediates microtubule nucleation. The gTuRC regulates the minus-end nucleation of alpha-beta tubulin heterodimers that grow into microtubule protafilaments, a critical step in centrosome duplication and spindle formation. The protein is Gamma-tubulin complex component 3 (TUBGCP3) of Homo sapiens (Human).